The chain runs to 209 residues: Peptide deformylase 2 (209 aa).

Residues Cys101 and His149 each contribute to the Fe cation site. Glu150 is an active-site residue. His153 is a Fe cation binding site.

This sequence belongs to the polypeptide deformylase family. Fe(2+) is required as a cofactor.

The catalysed reaction is N-terminal N-formyl-L-methionyl-[peptide] + H2O = N-terminal L-methionyl-[peptide] + formate. Its function is as follows. Removes the formyl group from the N-terminal Met of newly synthesized proteins. Requires at least a dipeptide for an efficient rate of reaction. N-terminal L-methionine is a prerequisite for activity but the enzyme has broad specificity at other positions. This chain is Peptide deformylase 2, found in Coxiella burnetii (strain RSA 493 / Nine Mile phase I).